The following is a 501-amino-acid chain: ATP synthase subunit alpha (501 aa).

ATP is bound at residue 169 to 176 (GDRQTGKT).

Belongs to the ATPase alpha/beta chains family. As to quaternary structure, F-type ATPases have 2 components, CF(1) - the catalytic core - and CF(0) - the membrane proton channel. CF(1) has five subunits: alpha(3), beta(3), gamma(1), delta(1), epsilon(1). CF(0) has three main subunits: a(1), b(2) and c(9-12). The alpha and beta chains form an alternating ring which encloses part of the gamma chain. CF(1) is attached to CF(0) by a central stalk formed by the gamma and epsilon chains, while a peripheral stalk is formed by the delta and b chains.

Its subcellular location is the cell membrane. The enzyme catalyses ATP + H2O + 4 H(+)(in) = ADP + phosphate + 5 H(+)(out). Functionally, produces ATP from ADP in the presence of a proton gradient across the membrane. The alpha chain is a regulatory subunit. The polypeptide is ATP synthase subunit alpha (Streptococcus equi subsp. equi (strain 4047)).